The primary structure comprises 1588 residues: Paternally-expressed gene 3 protein (1588 aa).

The 83-residue stretch at 46–128 (HQRFRNLIYV…TLLENYKEMY (83 aa)) folds into the SCAN box domain. 3 disordered regions span residues 128–231 (YQPE…YQNV), 265–304 (GHSHMTQGHSSRSKRSAYPSTSRGLKTMPEAKKSTHRRGI), and 317–347 (KFIKDVSRSSKSGRARESSDRSQRFPRMSDD). A compositionally biased stretch (acidic residues) spans 129–142 (QPEDDNNSDVTSDD). 4 stretches are compositionally biased toward basic and acidic residues: residues 143–152 (DMTRNRRESS), 160–181 (FSDRDWDRRGRSRDMEPRDRWS), 205–224 (FEMDREDDRDSRAYESRSQD), and 293–304 (PEAKKSTHRRGI). 3 consecutive C2H2-type zinc fingers follow at residues 452–474 (YVCDECGRSFSVISEFVEHQIMH), 505–527 (FECKDCGETFNKSAALAEHRKIH), and 563–585 (YECRVCKETFLHSSALIEHQKIH). The span at 588–607 (DDKDNEREHERERERERGET) shows a compositional bias: basic and acidic residues. Residues 588-608 (DDKDNEREHERERERERGETF) form a disordered region. A C2H2-type 4 zinc finger spans residues 627–649 (YECKVCGETFLHSSSLKEHQKIH). Disordered regions lie at residues 839 to 889 (VASK…SKNR) and 905 to 929 (QKSVPGEGSGEFKKDGEFSVPSSNV). Positions 868–881 (LNDKRQKIPARENP) are enriched in basic and acidic residues. The segment at 969-991 (YECQECGECFAHSSDLTEHQKIH) adopts a C2H2-type 5 zinc-finger fold. Positions 1056–1104 (EKSHGEESQGENTDGEETHSEETHGQETIEDPVIQGSDMEDPQKDDPDD) are disordered. The segment covering 1071–1082 (EETHSEETHGQE) has biased composition (basic and acidic residues). C2H2-type zinc fingers lie at residues 1107-1129 (YECEDCGLGFVDLTDLTDHQKVH), 1163-1185 (YECPKCGESFIHSSFLFEHQRIH), 1225-1247 (IRCLLCGQGFIHSSALNEHMRLH), 1282-1304 (FECAVCGESFVNPAELADHVTVH), and 1332-1354 (YECKDCGKSFIHSTVLTKHKELH). A compositionally biased stretch (acidic residues) spans 1396–1415 (EPEVEAAEPEVEAAEPEVEA). Residues 1396–1495 (EPEVEAAEPE…GIEDPEEGED (100 aa)) are disordered. 7 consecutive repeat copies span residues 1397–1403 (PEVEAAE), 1404–1410 (PEVEAAE), 1411–1417 (PEVEAAE), 1418–1422 (PNGEA), 1425–1429 (PDGEA), 1432–1436 (PIGEA), and 1439–1443 (PNGEA). Residues 1397–1417 (PEVEAAEPEVEAAEPEVEAAE) are 3 X 7 AA repeat of P-E-V-E-A-A-E. The interval 1418 to 1443 (PNGEAEGPDGEAAEPIGEAGQPNGEA) is 4 X 5 AA repeat of P-X-G-E-A. 2 stretches are compositionally biased toward acidic residues: residues 1449-1466 (DADEPDGAGIEDPEERAE) and 1475-1495 (PEGDADEPDGVGIEDPEEGED). 2 C2H2-type zinc fingers span residues 1505-1527 (YDCHECTETFTSSTAFSEHLKTH) and 1564-1586 (FKCDVCGQLFNDRLSLARHQNTH).

This sequence belongs to the krueppel C2H2-type zinc-finger protein family. As to quaternary structure, homodimer. Interacts with SIAH1A and SIAH2. Interacts with TRAF2. Brain, glial cells, astrocytes, embryo, placenta, testis, ovary and uterus. In the placenta it is found in the layer of villous cytotrophoblast cells while in the ovary it is found in the cells of the ovarian stroma including the thecal layers around the follicles. Expression is highly repressed in glioma cell lines.

It is found in the nucleus. Its subcellular location is the cytoplasm. In terms of biological role, induces apoptosis in cooperation with SIAH1A. Acts as a mediator between p53/TP53 and BAX in a neuronal death pathway that is activated by DNA damage. Acts synergistically with TRAF2 and inhibits TNF induced apoptosis through activation of NF-kappa-B. Possesses a tumor suppressing activity in glioma cells. The chain is Paternally-expressed gene 3 protein (PEG3) from Homo sapiens (Human).